The chain runs to 353 residues: UDP-N-acetylglucosamine--N-acetylmuramyl-(pentapeptide) pyrophosphoryl-undecaprenol N-acetylglucosamine transferase (353 aa).

UDP-N-acetyl-alpha-D-glucosamine-binding positions include Asn123, Arg161, Ser189, Ile243, 262 to 267, and Gln287; that span reads ALTVSE.

Belongs to the glycosyltransferase 28 family. MurG subfamily.

It is found in the cell membrane. It catalyses the reaction di-trans,octa-cis-undecaprenyl diphospho-N-acetyl-alpha-D-muramoyl-L-alanyl-D-glutamyl-meso-2,6-diaminopimeloyl-D-alanyl-D-alanine + UDP-N-acetyl-alpha-D-glucosamine = di-trans,octa-cis-undecaprenyl diphospho-[N-acetyl-alpha-D-glucosaminyl-(1-&gt;4)]-N-acetyl-alpha-D-muramoyl-L-alanyl-D-glutamyl-meso-2,6-diaminopimeloyl-D-alanyl-D-alanine + UDP + H(+). Its pathway is cell wall biogenesis; peptidoglycan biosynthesis. Functionally, cell wall formation. Catalyzes the transfer of a GlcNAc subunit on undecaprenyl-pyrophosphoryl-MurNAc-pentapeptide (lipid intermediate I) to form undecaprenyl-pyrophosphoryl-MurNAc-(pentapeptide)GlcNAc (lipid intermediate II). This is UDP-N-acetylglucosamine--N-acetylmuramyl-(pentapeptide) pyrophosphoryl-undecaprenol N-acetylglucosamine transferase from Buchnera aphidicola subsp. Baizongia pistaciae (strain Bp).